The primary structure comprises 523 residues: GMP synthase [glutamine-hydrolyzing] (523 aa).

The Glutamine amidotransferase type-1 domain maps to 9-198; that stretch reads PVLVVDFGAQ…LTEIAGLEQN (190 aa). Cysteine 86 functions as the Nucleophile in the catalytic mechanism. Residues histidine 172 and glutamate 174 contribute to the active site. Residues 199-397 enclose the GMPS ATP-PPase domain; the sequence is WTAANIAEEL…LGLPEEIVGR (199 aa). 227–233 lines the ATP pocket; the sequence is SGGVDSA.

In terms of assembly, homodimer.

The enzyme catalyses XMP + L-glutamine + ATP + H2O = GMP + L-glutamate + AMP + diphosphate + 2 H(+). The protein operates within purine metabolism; GMP biosynthesis; GMP from XMP (L-Gln route): step 1/1. Catalyzes the synthesis of GMP from XMP. This chain is GMP synthase [glutamine-hydrolyzing], found in Corynebacterium glutamicum (strain R).